The following is a 195-amino-acid chain: Probable GTP-binding protein EngB (195 aa).

Residues 22–195 (GLPEIALAGR…WNAILAKINK (174 aa)) enclose the EngB-type G domain. Residues 30–37 (GRSNVGKS), 57–61 (GKTQT), 75–78 (DVPG), 142–145 (TKAD), and 174–176 (FSS) each bind GTP. The Mg(2+) site is built by S37 and T59.

The protein belongs to the TRAFAC class TrmE-Era-EngA-EngB-Septin-like GTPase superfamily. EngB GTPase family. Mg(2+) serves as cofactor.

Its function is as follows. Necessary for normal cell division and for the maintenance of normal septation. This chain is Probable GTP-binding protein EngB, found in Bacillus pumilus (strain SAFR-032).